Consider the following 341-residue polypeptide: Malate dehydrogenase, mitochondrial (341 aa).

NAD(+) is bound by residues 35 to 41 and Asp61; that span reads GAGGGIG. The substrate site is built by Arg109 and Arg115. Asn122 contributes to the NAD(+) binding site. 2 residues coordinate substrate: Asn147 and Arg181. His205 acts as the Proton acceptor in catalysis. Met254 serves as a coordination point for NAD(+).

It belongs to the LDH/MDH superfamily. MDH type 1 family. In terms of assembly, homodimer.

Its subcellular location is the mitochondrion matrix. It carries out the reaction (S)-malate + NAD(+) = oxaloacetate + NADH + H(+). This is Malate dehydrogenase, mitochondrial (MDH1) from Schizosaccharomyces pombe (strain 972 / ATCC 24843) (Fission yeast).